A 475-amino-acid polypeptide reads, in one-letter code: Aspartyl/glutamyl-tRNA(Asn/Gln) amidotransferase subunit B (475 aa).

The protein belongs to the GatB/GatE family. GatB subfamily. In terms of assembly, heterotrimer of A, B and C subunits.

It carries out the reaction L-glutamyl-tRNA(Gln) + L-glutamine + ATP + H2O = L-glutaminyl-tRNA(Gln) + L-glutamate + ADP + phosphate + H(+). The enzyme catalyses L-aspartyl-tRNA(Asn) + L-glutamine + ATP + H2O = L-asparaginyl-tRNA(Asn) + L-glutamate + ADP + phosphate + 2 H(+). Its function is as follows. Allows the formation of correctly charged Asn-tRNA(Asn) or Gln-tRNA(Gln) through the transamidation of misacylated Asp-tRNA(Asn) or Glu-tRNA(Gln) in organisms which lack either or both of asparaginyl-tRNA or glutaminyl-tRNA synthetases. The reaction takes place in the presence of glutamine and ATP through an activated phospho-Asp-tRNA(Asn) or phospho-Glu-tRNA(Gln). The protein is Aspartyl/glutamyl-tRNA(Asn/Gln) amidotransferase subunit B of Chlorobium phaeobacteroides (strain BS1).